We begin with the raw amino-acid sequence, 245 residues long: Histone deacetylase HDT1 (245 aa).

Met1 bears the N-acetylmethionine mark. 2 required to repress transcription regions span residues 2-5 (EFWG) and 101-162 (GYSE…EEEE). The interval 99–245 (PQGYSEEEEE…HNKAKHAAAK (147 aa)) is disordered. Residues 103-113 (SEEEEEEEEEV) show a composition bias toward acidic residues. Low complexity predominate over residues 114–124 (PAGNAAKAVAK). Residues 137–162 (DDEEDESDSDGMDEDDSDGEDSEEEE) show a composition bias toward acidic residues. Residues 178–195 (TTPKAPVSAKKAKVAVTP) show a composition bias toward low complexity. The span at 208–234 (ANQSPKSASQVSCGSCKKTFNSGNALE) shows a compositional bias: polar residues. Ser211 is subject to Phosphoserine. The segment at 218–241 (VSCGSCKKTFNSGNALESHNKAKH) adopts a C2H2-type zinc-finger fold.

This sequence belongs to the histone deacetylase HD2 family. In terms of assembly, interacts with DNMT2. Interacts with DEK3. As to expression, expressed in leaves, roots, stems, young plantlets, flowers and siliques. Highest levels in ovules, embryos, shoot apical meristems and first leaves. Also expressed in somatic embryos.

Its subcellular location is the nucleus. It localises to the nucleolus. In terms of biological role, probably mediates the deacetylation of lysine residues on the N-terminal part of the core histones (H2A, H2B, H3 and H4). Histone deacetylation gives a tag for epigenetic repression and plays an important role in transcriptional regulation, cell cycle progression and developmental events. Required for histone H3 'Lys-9' deacetylation. Involved in rRNA gene silencing in nucleolar dominance. Seems to be implicated in the regulation of genes involved in seeds development. The polypeptide is Histone deacetylase HDT1 (Arabidopsis thaliana (Mouse-ear cress)).